The sequence spans 524 residues: RNA-splicing ligase RtcB homolog 2 (524 aa).

Residues D141, C144, H249, H281, and H372 each contribute to the Mn(2+) site. A GMP-binding site is contributed by 248–252; the sequence is NHYLE. Residues 372–373, 421–424, S428, 447–450, and K523 each bind GMP; these read HN, GGSM, and HGAG. Catalysis depends on H447, which acts as the GMP-histidine intermediate.

It belongs to the RtcB family. In terms of assembly, catalytic component of the tRNA-splicing ligase complex. Mn(2+) serves as cofactor.

The catalysed reaction is a 3'-end 3'-phospho-ribonucleotide-RNA + a 5'-end dephospho-ribonucleoside-RNA + GTP = a ribonucleotidyl-ribonucleotide-RNA + GMP + diphosphate. The enzyme catalyses a 3'-end 2',3'-cyclophospho-ribonucleotide-RNA + a 5'-end dephospho-ribonucleoside-RNA + GTP + H2O = a ribonucleotidyl-ribonucleotide-RNA + GMP + diphosphate + H(+). Functionally, catalytic subunit of the tRNA-splicing ligase complex that acts by directly joining spliced tRNA halves to mature-sized tRNAs by incorporating the precursor-derived splice junction phosphate into the mature tRNA as a canonical 3',5'-phosphodiester. May act as an RNA ligase with broad substrate specificity, and may function toward other RNAs. The chain is RNA-splicing ligase RtcB homolog 2 from Entamoeba dispar (strain ATCC PRA-260 / SAW760).